A 267-amino-acid polypeptide reads, in one-letter code: Serine/arginine-rich splicing factor 7 (267 aa).

In terms of domain architecture, RRM spans 40 to 113 (TKVYVGNLGT…SRVRVELSTG (74 aa)). Residue K53 is modified to N6-acetyllysine; alternate. K53 is covalently cross-linked (Glycyl lysine isopeptide (Lys-Gly) (interchain with G-Cter in SUMO2); alternate). A Phosphoserine modification is found at S61. A sufficient for interaction with NXF1 region spans residues 110–127 (LSTGMPRRSRFDRPPARR). Residues 133–150 (DRCYECGEKGHYAYDCHR) form a CCHC-type zinc finger. Residues 152-209 (SRRRRSRSRSRSHSRSRGRRYSRSRSRSRGRRSRSASPRRSRSVSLRRSRSASLRRSR) are compositionally biased toward basic residues. Positions 152–267 (SRRRRSRSRS…HRSASPERMD (116 aa)) are disordered. 4 tandem repeats follow at residues 182–189 (RRSRSASP), 190–197 (RRSRSVSL), 198–205 (RRSRSASL), and 206–213 (RRSRSGSI). The tract at residues 182–255 (RRSRSASPRR…SPKRSRSPSG (74 aa)) is 6 X 8 AA repeats of R-R-S-R-S-X-S-X. S192, S194, and S196 each carry phosphoserine. Residues S210, S212, S221, S223, and S225 each carry the phosphoserine modification. The segment covering 223–251 (SRSRSRSRSISRPRSSRSKSRSPSPKRSR) has biased composition (basic residues). The 5; approximate repeat unit spans residues 240–247 (SKSRSPSP). One copy of the 6; approximate repeat lies at 248–255 (KRSRSPSG). S260 and S262 each carry phosphoserine.

It belongs to the splicing factor SR family. In terms of assembly, found in large molecular weight complexes containing CCNL1 and the p110 isoforms of either CDC2L1 or CDC2L2. Interacts with CCNL2 and CPSF6. Interacts with NXF1. Interacts with YTHDC1. Extensively phosphorylated on serine residues in the RS domain.

The protein localises to the nucleus. The protein resides in the cytoplasm. Functionally, required for pre-mRNA splicing. Represses the splicing of MAPT/Tau exon 10. May function as export adapter involved in mRNA nuclear export such as of histone H2A. Binds mRNA which is thought to be transferred to the NXF1-NXT1 heterodimer for export (TAP/NXF1 pathway); enhances NXF1-NXT1 RNA-binding activity. RNA-binding is semi-sequence specific. The protein is Serine/arginine-rich splicing factor 7 (Srsf7) of Mus musculus (Mouse).